The primary structure comprises 439 residues: 3-phosphoshikimate 1-carboxyvinyltransferase (439 aa).

The 3-phosphoshikimate site is built by Lys-29, Ser-30, and Arg-34. Phosphoenolpyruvate is bound at residue Lys-29. Phosphoenolpyruvate contacts are provided by Gly-100 and Arg-128. Ser-173, Ser-174, Gln-175, Ser-201, Asp-321, and Lys-348 together coordinate 3-phosphoshikimate. Gln-175 is a phosphoenolpyruvate binding site. Asp-321 acts as the Proton acceptor in catalysis. 2 residues coordinate phosphoenolpyruvate: Arg-352 and Arg-395.

Belongs to the EPSP synthase family. Monomer.

It localises to the cytoplasm. It catalyses the reaction 3-phosphoshikimate + phosphoenolpyruvate = 5-O-(1-carboxyvinyl)-3-phosphoshikimate + phosphate. It participates in metabolic intermediate biosynthesis; chorismate biosynthesis. Functionally, catalyzes the transfer of the enolpyruvyl moiety of phosphoenolpyruvate (PEP) to the 5-hydroxyl of shikimate-3-phosphate (S3P) to produce enolpyruvyl shikimate-3-phosphate and inorganic phosphate. This Halobacterium salinarum (strain ATCC 700922 / JCM 11081 / NRC-1) (Halobacterium halobium) protein is 3-phosphoshikimate 1-carboxyvinyltransferase.